Here is a 191-residue protein sequence, read N- to C-terminus: Peptidyl-tRNA hydrolase (191 aa).

Y17 serves as a coordination point for tRNA. H22 acts as the Proton acceptor in catalysis. TRNA contacts are provided by Y68, N70, and N116.

This sequence belongs to the PTH family. Monomer.

The protein localises to the cytoplasm. The catalysed reaction is an N-acyl-L-alpha-aminoacyl-tRNA + H2O = an N-acyl-L-amino acid + a tRNA + H(+). Its function is as follows. Hydrolyzes ribosome-free peptidyl-tRNAs (with 1 or more amino acids incorporated), which drop off the ribosome during protein synthesis, or as a result of ribosome stalling. Catalyzes the release of premature peptidyl moieties from peptidyl-tRNA molecules trapped in stalled 50S ribosomal subunits, and thus maintains levels of free tRNAs and 50S ribosomes. The polypeptide is Peptidyl-tRNA hydrolase (Mycolicibacterium smegmatis (strain ATCC 700084 / mc(2)155) (Mycobacterium smegmatis)).